The chain runs to 443 residues: 5-methylthioadenosine/S-adenosylhomocysteine deaminase (443 aa).

Positions 74 and 76 each coordinate Zn(2+). Substrate contacts are provided by Glu103 and His196. His223 is a Zn(2+) binding site. Substrate-binding residues include Glu226 and Asp311. Asp311 contributes to the Zn(2+) binding site.

Belongs to the metallo-dependent hydrolases superfamily. MTA/SAH deaminase family. The cofactor is Zn(2+).

The enzyme catalyses S-adenosyl-L-homocysteine + H2O + H(+) = S-inosyl-L-homocysteine + NH4(+). It carries out the reaction S-methyl-5'-thioadenosine + H2O + H(+) = S-methyl-5'-thioinosine + NH4(+). Its function is as follows. Catalyzes the deamination of 5-methylthioadenosine and S-adenosyl-L-homocysteine into 5-methylthioinosine and S-inosyl-L-homocysteine, respectively. Is also able to deaminate adenosine. The polypeptide is 5-methylthioadenosine/S-adenosylhomocysteine deaminase (Haloquadratum walsbyi (strain DSM 16790 / HBSQ001)).